Consider the following 331-residue polypeptide: 5-dehydro-2-deoxygluconokinase (331 aa).

This sequence belongs to the carbohydrate kinase PfkB family.

It catalyses the reaction 5-dehydro-2-deoxy-D-gluconate + ATP = 6-phospho-5-dehydro-2-deoxy-D-gluconate + ADP + H(+). It functions in the pathway polyol metabolism; myo-inositol degradation into acetyl-CoA; acetyl-CoA from myo-inositol: step 5/7. In terms of biological role, catalyzes the phosphorylation of 5-dehydro-2-deoxy-D-gluconate (2-deoxy-5-keto-D-gluconate or DKG) to 6-phospho-5-dehydro-2-deoxy-D-gluconate (DKGP). The chain is 5-dehydro-2-deoxygluconokinase from Halalkalibacterium halodurans (strain ATCC BAA-125 / DSM 18197 / FERM 7344 / JCM 9153 / C-125) (Bacillus halodurans).